The primary structure comprises 428 residues: GTPase Obg (428 aa).

The region spanning 1–158 (MFVDQVKIYV…RDVILELKVL (158 aa)) is the Obg domain. An OBG-type G domain is found at 159–329 (ADVGLVGFPS…LLFEVANLIE (171 aa)). GTP-binding positions include 165 to 172 (GFPSVGKS), 190 to 194 (FTTIV), 212 to 215 (DLPG), 282 to 285 (NKMD), and 310 to 312 (SAV). Residues S172 and T192 each coordinate Mg(2+). The region spanning 350–428 (KFDTEGVKFE…ILEYEFEFID (79 aa)) is the OCT domain.

The protein belongs to the TRAFAC class OBG-HflX-like GTPase superfamily. OBG GTPase family. In terms of assembly, monomer. Mg(2+) is required as a cofactor.

The protein resides in the cytoplasm. Its function is as follows. An essential GTPase which binds GTP, GDP and possibly (p)ppGpp with moderate affinity, with high nucleotide exchange rates and a fairly low GTP hydrolysis rate. Plays a role in control of the cell cycle, stress response, ribosome biogenesis and in those bacteria that undergo differentiation, in morphogenesis control. The polypeptide is GTPase Obg (Bacillus cereus (strain ATCC 14579 / DSM 31 / CCUG 7414 / JCM 2152 / NBRC 15305 / NCIMB 9373 / NCTC 2599 / NRRL B-3711)).